Here is a 407-residue protein sequence, read N- to C-terminus: Phosphopentomutase (407 aa).

Mn(2+) contacts are provided by aspartate 11, aspartate 305, histidine 310, aspartate 346, histidine 347, and histidine 358.

The protein belongs to the phosphopentomutase family. The cofactor is Mn(2+).

It is found in the cytoplasm. The catalysed reaction is 2-deoxy-alpha-D-ribose 1-phosphate = 2-deoxy-D-ribose 5-phosphate. The enzyme catalyses alpha-D-ribose 1-phosphate = D-ribose 5-phosphate. The protein operates within carbohydrate degradation; 2-deoxy-D-ribose 1-phosphate degradation; D-glyceraldehyde 3-phosphate and acetaldehyde from 2-deoxy-alpha-D-ribose 1-phosphate: step 1/2. In terms of biological role, isomerase that catalyzes the conversion of deoxy-ribose 1-phosphate (dRib-1-P) and ribose 1-phosphate (Rib-1-P) to deoxy-ribose 5-phosphate (dRib-5-P) and ribose 5-phosphate (Rib-5-P), respectively. The chain is Phosphopentomutase from Legionella pneumophila (strain Corby).